The sequence spans 555 residues: Urocanate hydratase (555 aa).

NAD(+) is bound by residues 51–52 (GG), Gln-129, 175–177 (GMG), Glu-195, 262–266 (QTSAH), 272–273 (YL), and Tyr-321. Cys-409 is an active-site residue. Residue Gly-491 participates in NAD(+) binding.

This sequence belongs to the urocanase family. NAD(+) serves as cofactor.

The protein resides in the cytoplasm. It carries out the reaction 4-imidazolone-5-propanoate = trans-urocanate + H2O. Its pathway is amino-acid degradation; L-histidine degradation into L-glutamate; N-formimidoyl-L-glutamate from L-histidine: step 2/3. In terms of biological role, catalyzes the conversion of urocanate to 4-imidazolone-5-propionate. This is Urocanate hydratase from Xanthomonas euvesicatoria pv. vesicatoria (strain 85-10) (Xanthomonas campestris pv. vesicatoria).